We begin with the raw amino-acid sequence, 598 residues long: Polypeptide N-acetylgalactosaminyltransferase 17 (598 aa).

At 1 to 6 (MASLRR) the chain is on the cytoplasmic side. A helical; Signal-anchor for type II membrane protein transmembrane segment spans residues 7–27 (VKVLLVLNLIAVAGFVLFLAK). The Lumenal portion of the chain corresponds to 28 to 598 (CRPIAVRSGD…QRWTIKNSIK (571 aa)). Asn-50 carries an N-linked (GlcNAc...) asparagine glycan. 2 disulfide bridges follow: Cys-142–Cys-373 and Cys-364–Cys-443. The segment at 151–262 (LPQISIIFIF…AGWAEPVLSR (112 aa)) is catalytic subdomain A. Substrate is bound by residues Asp-192 and Arg-223. Residues Asp-246, His-248, and His-378 each coordinate Mn(2+). A catalytic subdomain B region spans residues 319–381 (PIRTPAMIGC…PCSRVAHIER (63 aa)). Residues Arg-381 and Tyr-386 each contribute to the substrate site. Asn-461 and Asn-486 each carry an N-linked (GlcNAc...) asparagine glycan. The 130-residue stretch at 465–594 (AYGELRNNKA…SCTGQRWTIK (130 aa)) folds into the Ricin B-type lectin domain. Cystine bridges form between Cys-478-Cys-494, Cys-526-Cys-541, and Cys-568-Cys-586.

This sequence belongs to the glycosyltransferase 2 family. GalNAc-T subfamily. Requires Mn(2+) as cofactor. Highly expressed in brain and heart. Weakly expressed in kidney, liver, lung and spleen.

Its subcellular location is the golgi apparatus membrane. It catalyses the reaction L-seryl-[protein] + UDP-N-acetyl-alpha-D-galactosamine = a 3-O-[N-acetyl-alpha-D-galactosaminyl]-L-seryl-[protein] + UDP + H(+). The enzyme catalyses L-threonyl-[protein] + UDP-N-acetyl-alpha-D-galactosamine = a 3-O-[N-acetyl-alpha-D-galactosaminyl]-L-threonyl-[protein] + UDP + H(+). The protein operates within protein modification; protein glycosylation. Functionally, may catalyze the initial reaction in O-linked oligosaccharide biosynthesis, the transfer of an N-acetyl-D-galactosamine residue to a serine or threonine residue on the protein receptor. The protein is Polypeptide N-acetylgalactosaminyltransferase 17 of Homo sapiens (Human).